The primary structure comprises 1842 residues: Fatty acid synthase alpha subunit pigJ (1842 aa).

A disordered region spans residues 120-184 (GAPVEEEGSK…TPAGGSTTPD (65 aa)). A compositionally biased stretch (low complexity) spans 140-175 (SGSSRTATTAKATVTTPSSSSPETAPPAASTPSQGT). The Carrier domain maps to 184–262 (DIPLSAKHVV…DALQGNFPGK (79 aa)). Serine 222 is modified (O-(pantetheine 4'-phosphoryl)serine). A beta-ketoacyl reductase region spans residues 611 to 807 (GKTVLVTGAG…CGAAIGWVRG (197 aa)). One can recognise a Ketosynthase family 3 (KS3) domain in the interval 1058-1585 (KEFLQEIVVE…QKGGIAVVVA (528 aa)). Catalysis depends on for beta-ketoacyl synthase activity residues cysteine 1244, histidine 1470, and histidine 1511. The disordered stretch occupies residues 1649 to 1672 (KARVGGHPENNNNNNNNSSSKRNT). Positions 1658–1668 (NNNNNNNNSSS) are enriched in low complexity. The Mg(2+) site is built by aspartate 1725, valine 1726, and glutamate 1727. Acetyl-CoA-binding positions include 1725–1727 (DVE), serine 1761, 1770–1780 (EAVFKSLQTPS), and 1823–1825 (ITH). 2 residues coordinate Mg(2+): threonine 1824 and histidine 1825.

This sequence belongs to the thiolase-like superfamily. Fungal fatty acid synthetase subunit alpha family. In terms of assembly, [Alpha(6)beta(6)] hexamers of two multifunctional subunits (alpha and beta).

The enzyme catalyses acetyl-CoA + n malonyl-CoA + 2n NADPH + 4n H(+) = a long-chain-acyl-CoA + n CoA + n CO2 + 2n NADP(+).. It carries out the reaction a fatty acyl-[ACP] + malonyl-[ACP] + H(+) = a 3-oxoacyl-[ACP] + holo-[ACP] + CO2. It catalyses the reaction a (3R)-hydroxyacyl-[ACP] + NADP(+) = a 3-oxoacyl-[ACP] + NADPH + H(+). Its pathway is secondary metabolite biosynthesis. Fatty acid synthase alpha subunit; part of the gene cluster that mediates the biosynthesis of azaphilone pigments (MonAzPs), a complex mixture of compounds with a common azaphilone skeleton very widely used as food colorants. PigJ and pigK form the two subunits of a dedicated fungal fatty acid synthase (FAS) that produces the side chain fatty acyl moiety of MonAzPs, a beta-keto fatty acid. The chain length control of the pigJ-pigK FAS is somewhat flexible as MonAzPs features either a beta-ketooctanoic or a beta-ketodecanoic acid moiety. The beta-ketoacyl-ACP probably serves as the substrate for the acetyltransferase pigD that directly transfers the fatty acyl chain to the C-4 alcohol of the pyran ring. The first step of the pathway is performed by the nrPKS pigA that forms the hexaketide precursor from successive condensations of five malonyl-CoA units, with a simple acetyl-CoA starter unit. The role of esterase pigG is not clear, but it may play at most a supplementary role in the formation of the benzaldehyde produced by the pigA nrPKS. This very reactive benzaldehyde is intercepted by the pigC ketoreductase that to provide the first stable enzyme-free MonAzPs intermediate, 6-(4-hydroxy-2-oxopentyl)-3-methyl-2,4-dioxocyclohexane carbaldehyde, also known as M7PKS-1. The FAD-dependent monooxygenase pigN hydroxylates M7PKS-1 at C-4, which triggers the formation of the pyran ring. PigJ, pigK and pigD are involved in the acetylation of the pyran ring. PigJ and pigK form the two subunits of a dedicated fungal FAS that produces the side chain fatty acyl moiety of MonAzPs and pigD transfers the fatty acyl chain to the C-4 alcohol. PigM and pigO are involved in the elimination of the omega-1 alcohol. PigM acts as an O-acetyltransferase that synthesizes the putative O-11 acetyl intermediate whereas pigO eliminates acetic acid to yield an intermediate with a C10(11) double bond. The dehydration of the C-11 alcohol followed by the reduction of the C6(7) double bond by the NAD(P)H-dependent oxidoreductase pigE increases the electrophilicity of the C-5 ketone of the resulting acyl benzopyran. This in turn sets up the C-5 ketone for an intramolecular Knoevenagel aldol condensation with the C-20 enol of the side chain. This condensation affords the characteristic linear tricyclic carbon skeletons of the yellow pigments that serve as the common precursors for the classical yellow pigments monascin and ankaflavin, orange pigments rubopunctatin and monascorubrin, and red pigments ribropunctamine and monascorubramine. The FAD-dependent oxidoreductase pigF is especially invoved in the biosynthesis of orange and red pigments via desaturation of C6(7). This is Fatty acid synthase alpha subunit pigJ from Monascus ruber (Mold).